Reading from the N-terminus, the 728-residue chain is UvrABC system protein C (728 aa).

In terms of domain architecture, GIY-YIG spans 16–95 (DSPGVYRFRD…IKEYDPRFNV (80 aa)). The UVR domain occupies 208–243 (GTYLRRLERQMAEAAEEMEYERAARLRDDIGALKKA). 2 disordered regions span residues 473-535 (ADGE…GRPK) and 689-728 (VNTATGEIMDDDDGAPETTADAPGEPVSAGTPDERRGQER). A compositionally biased stretch (low complexity) spans 487-505 (GDAAPNGDAAPNDGAAPDD).

It belongs to the UvrC family. Interacts with UvrB in an incision complex.

It is found in the cytoplasm. Functionally, the UvrABC repair system catalyzes the recognition and processing of DNA lesions. UvrC both incises the 5' and 3' sides of the lesion. The N-terminal half is responsible for the 3' incision and the C-terminal half is responsible for the 5' incision. The protein is UvrABC system protein C of Streptomyces coelicolor (strain ATCC BAA-471 / A3(2) / M145).